The following is a 132-amino-acid chain: Small ribosomal subunit protein uS11 (132 aa).

The protein belongs to the universal ribosomal protein uS11 family. As to quaternary structure, part of the 30S ribosomal subunit. Interacts with proteins S7 and S18. Binds to IF-3.

In terms of biological role, located on the platform of the 30S subunit, it bridges several disparate RNA helices of the 16S rRNA. Forms part of the Shine-Dalgarno cleft in the 70S ribosome. This chain is Small ribosomal subunit protein uS11, found in Cupriavidus pinatubonensis (strain JMP 134 / LMG 1197) (Cupriavidus necator (strain JMP 134)).